A 218-amino-acid polypeptide reads, in one-letter code: MTQKVVVIYSGGMDSFTVLNKALQQGHDVYALSFDYGQRHVKELKVAAQVCKQLNVPHKIVDISAINQIIGGSSLTDDIDVPEGHYEEDSMKSTIVPNRNMILLSLAVGYAVSLKASQVYYGAHSGDHAIYPDCRPEFVQKMDDVCRIANYDAVEIFSPYLNNTKIDILTDGIAMGLDYSQTWTCYNGREKACGKCGACQERLEAFEVNNLTDPLEYE.

Residue 9–19 (YSGGMDSFTVL) participates in ATP binding. Residues C185, C193, C196, and C199 each contribute to the Zn(2+) site.

The protein belongs to the QueC family. It depends on Zn(2+) as a cofactor.

It carries out the reaction 7-carboxy-7-deazaguanine + NH4(+) + ATP = 7-cyano-7-deazaguanine + ADP + phosphate + H2O + H(+). It functions in the pathway purine metabolism; 7-cyano-7-deazaguanine biosynthesis. In terms of biological role, catalyzes the ATP-dependent conversion of 7-carboxy-7-deazaguanine (CDG) to 7-cyano-7-deazaguanine (preQ(0)). This is 7-cyano-7-deazaguanine synthase from Pseudoalteromonas translucida (strain TAC 125).